The following is a 206-amino-acid chain: Small ribosomal subunit protein uS4 (206 aa).

One can recognise an S4 RNA-binding domain in the interval 96 to 156; sequence CRLDNVVYRM…EKAKNQLRIA (61 aa).

The protein belongs to the universal ribosomal protein uS4 family. In terms of assembly, part of the 30S ribosomal subunit. Contacts protein S5. The interaction surface between S4 and S5 is involved in control of translational fidelity.

One of the primary rRNA binding proteins, it binds directly to 16S rRNA where it nucleates assembly of the body of the 30S subunit. Functionally, with S5 and S12 plays an important role in translational accuracy. This Azotobacter vinelandii (strain DJ / ATCC BAA-1303) protein is Small ribosomal subunit protein uS4.